The sequence spans 276 residues: NH(3)-dependent NAD(+) synthetase (276 aa).

43-50 contributes to the ATP binding site; the sequence is GISGGVDS. Residue Asp49 participates in Mg(2+) binding. Arg146 is a binding site for deamido-NAD(+). Thr166 contributes to the ATP binding site. Glu171 is a Mg(2+) binding site. Deamido-NAD(+) is bound by residues Lys179 and Asp186. Positions 195 and 217 each coordinate ATP. Position 266–267 (266–267) interacts with deamido-NAD(+); the sequence is HK.

The protein belongs to the NAD synthetase family. Homodimer.

It catalyses the reaction deamido-NAD(+) + NH4(+) + ATP = AMP + diphosphate + NAD(+) + H(+). It functions in the pathway cofactor biosynthesis; NAD(+) biosynthesis; NAD(+) from deamido-NAD(+) (ammonia route): step 1/1. Functionally, catalyzes the ATP-dependent amidation of deamido-NAD to form NAD. Uses ammonia as a nitrogen source. The protein is NH(3)-dependent NAD(+) synthetase of Vibrio vulnificus (strain YJ016).